Reading from the N-terminus, the 532-residue chain is O-phosphoserine--tRNA(Cys) ligase (532 aa).

Substrate-binding positions include 186–188 (HMT), 231–233 (SAS), 273–274 (YY), and N317.

Belongs to the class-II aminoacyl-tRNA synthetase family. O-phosphoseryl-tRNA(Cys) synthetase subfamily. In terms of assembly, homotetramer. Interacts with SepCysS.

The enzyme catalyses tRNA(Cys) + O-phospho-L-serine + ATP = O-phospho-L-seryl-tRNA(Cys) + AMP + diphosphate. Functionally, catalyzes the attachment of O-phosphoserine (Sep) to tRNA(Cys). This Methanothermobacter thermautotrophicus (strain ATCC 29096 / DSM 1053 / JCM 10044 / NBRC 100330 / Delta H) (Methanobacterium thermoautotrophicum) protein is O-phosphoserine--tRNA(Cys) ligase.